A 205-amino-acid chain; its full sequence is ATP-dependent Clp protease proteolytic subunit (205 aa).

Ser108 serves as the catalytic Nucleophile. The active site involves His133.

This sequence belongs to the peptidase S14 family. Fourteen ClpP subunits assemble into 2 heptameric rings which stack back to back to give a disk-like structure with a central cavity, resembling the structure of eukaryotic proteasomes.

It is found in the cytoplasm. The catalysed reaction is Hydrolysis of proteins to small peptides in the presence of ATP and magnesium. alpha-casein is the usual test substrate. In the absence of ATP, only oligopeptides shorter than five residues are hydrolyzed (such as succinyl-Leu-Tyr-|-NHMec, and Leu-Tyr-Leu-|-Tyr-Trp, in which cleavage of the -Tyr-|-Leu- and -Tyr-|-Trp bonds also occurs).. Functionally, cleaves peptides in various proteins in a process that requires ATP hydrolysis. Has a chymotrypsin-like activity. Plays a major role in the degradation of misfolded proteins. This is ATP-dependent Clp protease proteolytic subunit from Alcanivorax borkumensis (strain ATCC 700651 / DSM 11573 / NCIMB 13689 / SK2).